Reading from the N-terminus, the 370-residue chain is S-adenosylmethionine decarboxylase proenzyme (370 aa).

A substrate-binding site is contributed by Phe28. Catalysis depends on residues Glu29 and Glu32. Residue Glu85 participates in substrate binding. The active-site Schiff-base intermediate with substrate; via pyruvic acid is the Ser86. At Ser86 the chain carries Pyruvic acid (Ser); by autocatalysis. Catalysis depends on Cys100, which acts as the Proton donor; for catalytic activity. Catalysis depends on proton acceptor; for processing activity residues Ser250 and His263. Glu267 lines the substrate pocket.

It belongs to the eukaryotic AdoMetDC family. As to quaternary structure, forms a heterodimer with catalytically inactive AdoMetDC prozyme; heterodimerization is required to activate AdoMetDC. Pyruvate is required as a cofactor. Is synthesized initially as an inactive proenzyme. Formation of the active enzyme involves a self-maturation process in which the active site pyruvoyl group is generated from an internal serine residue via an autocatalytic post-translational modification. Two non-identical subunits are generated from the proenzyme in this reaction, and the pyruvate is formed at the N-terminus of the alpha chain, which is derived from the carboxyl end of the proenzyme. The post-translation cleavage follows an unusual pathway, termed non-hydrolytic serinolysis, in which the side chain hydroxyl group of the serine supplies its oxygen atom to form the C-terminus of the beta chain, while the remainder of the serine residue undergoes an oxidative deamination to the alpha chain.

It catalyses the reaction S-adenosyl-L-methionine + H(+) = S-adenosyl 3-(methylsulfanyl)propylamine + CO2. It functions in the pathway amine and polyamine biosynthesis; S-adenosylmethioninamine biosynthesis; S-adenosylmethioninamine from S-adenosyl-L-methionine: step 1/1. With respect to regulation, allosterically activated by AdoMetDC prozyme. Activated by putrescine. Inhibited by spermine and methylglyoxal-bis(guanylhydrazone) (MGBG) and slightly by spermidine. Inhibited by 5'-([(Z)-4-amino-2-butenyl]methylamino)-5'-deoxyadenosine (MDL 73811). Its function is as follows. Probably in association with catalytically inactive AdoMetDC prozyme, catalyzes the decarboxylation of S-adenosyl-L-methionine which is essential for the biosynthesis of the polyamine spermidine. Required for growth and survival during the bloodstream life cycle stage. The polypeptide is S-adenosylmethionine decarboxylase proenzyme (Trypanosoma cruzi).